The chain runs to 921 residues: Isoleucine--tRNA ligase (921 aa).

Residues Pro57–His67 carry the 'HIGH' region motif. An L-isoleucyl-5'-AMP-binding site is contributed by Glu552. A 'KMSKS' region motif is present at residues Lys593–Ser597. Lys596 contacts ATP. Residues Cys888, Cys891, Cys908, and Cys911 each coordinate Zn(2+).

Belongs to the class-I aminoacyl-tRNA synthetase family. IleS type 1 subfamily. Monomer. The cofactor is Zn(2+).

The protein resides in the cytoplasm. It catalyses the reaction tRNA(Ile) + L-isoleucine + ATP = L-isoleucyl-tRNA(Ile) + AMP + diphosphate. Its function is as follows. Catalyzes the attachment of isoleucine to tRNA(Ile). As IleRS can inadvertently accommodate and process structurally similar amino acids such as valine, to avoid such errors it has two additional distinct tRNA(Ile)-dependent editing activities. One activity is designated as 'pretransfer' editing and involves the hydrolysis of activated Val-AMP. The other activity is designated 'posttransfer' editing and involves deacylation of mischarged Val-tRNA(Ile). This Bacillus cereus (strain AH820) protein is Isoleucine--tRNA ligase.